We begin with the raw amino-acid sequence, 1087 residues long: A-kinase anchor protein 9 (1087 aa).

The stretch at 5–461 (EVQCQAEKVR…REREKMERIQ (457 aa)) forms a coiled coil. A PKA-RII subunit binding domain region spans residues 559 to 572 (SLQKVLEEKVAAAL). A coiled-coil region spans residues 614-773 (MESDVSALTW…SEKEDKTEVQ (160 aa)). Residues 667 to 685 (VQDSETKQRERERQSRLHG) show a composition bias toward basic and acidic residues. The segment at 667 to 691 (VQDSETKQRERERQSRLHGDLGVLE) is disordered.

Interacts with the regulatory region of protein kinase N (PKN), protein phosphatase 2A (PP2A), protein phosphatase 1 (PP1) and the immature non-phosphorylated form of PKC epsilon. Interacts with CIP4 and FNBP1. Interacts with chloride intracellular channel proteins CLIC1, CLIC4 and CLIC5. CSNK1D binding promotes its centrosomal subcellular location. Interacts with GM130/GOLGA2; leading to recruitment to the Golgi apparatus. Interacts with KCNQ1; targets protein kinase A (PKA) catalytic and regulatory subunits and protein phosphatase 1 (PP1), to the heterodimer KCNQ1-KCNE1. Interacts with PDE4DIP; this interaction stabilizes both proteins. In complex with PDE4DIP, recruits CAMSAP2 to the Golgi apparatus. Forms a pericentrosomal complex with CDK5RAP2, EB1/MAPRE1 and PDE4DIP; within this complex, MAPRE1 binding to CDK5RAP2 may be mediated by PDE4DIP. The interaction with PDE4DIP is isoform-specific. Interacts with MAPRE1 and MAPRE3. Interacts (via C-terminus) with CAMSAP2; this interaction is much stronger in the presence of PDE4DIP. Interacts with CAMSAP3. Interacts (via C-terminus) with the gamma-tubulin ring complex (gamma-TuRC), composed of gamma-tubulin, TUBGCP2, TUBGCP3, TUBGCP4, TUBGCP5 and TUBGCP6. In terms of tissue distribution, highly expressed in gastric parietal cells.

It localises to the golgi apparatus. The protein localises to the cytoplasm. The protein resides in the cytoskeleton. Its subcellular location is the microtubule organizing center. It is found in the centrosome. Scaffolding protein that assembles several protein kinases and phosphatases on the centrosome and Golgi apparatus. Required to maintain the integrity of the Golgi apparatus. Required for microtubule nucleation at the cis-side of the Golgi apparatus. Required for association of the centrosomes with the poles of the bipolar mitotic spindle during metaphase. In complex with PDE4DIP, recruits CAMSAP2 to the Golgi apparatus and tethers non-centrosomal minus-end microtubules to the Golgi, an important step for polarized cell movement. In complex with PDE4DIP, EB1/MAPRE1 and CDK5RAP2, contributes to microtubules nucleation and extension also from the centrosome to the cell periphery. The interaction with PDE4DIP is isoform-specific. The sequence is that of A-kinase anchor protein 9 (AKAP9) from Oryctolagus cuniculus (Rabbit).